The following is a 415-amino-acid chain: Tyrosine--tRNA ligase (415 aa).

Tyr-34 contributes to the L-tyrosine binding site. Residues 39–48 (PTADSLHLGH) carry the 'HIGH' region motif. L-tyrosine contacts are provided by Tyr-164 and Gln-168. The short motif at 226–230 (KFGKS) is the 'KMSKS' region element. Lys-229 is a binding site for ATP. Positions 348 to 415 (KNIVDFLVDG…KKKYFLGKIK (68 aa)) constitute an S4 RNA-binding domain.

The protein belongs to the class-I aminoacyl-tRNA synthetase family. TyrS type 1 subfamily. As to quaternary structure, homodimer.

The protein localises to the cytoplasm. The catalysed reaction is tRNA(Tyr) + L-tyrosine + ATP = L-tyrosyl-tRNA(Tyr) + AMP + diphosphate + H(+). Catalyzes the attachment of tyrosine to tRNA(Tyr) in a two-step reaction: tyrosine is first activated by ATP to form Tyr-AMP and then transferred to the acceptor end of tRNA(Tyr). This is Tyrosine--tRNA ligase from Leuconostoc citreum (strain KM20).